We begin with the raw amino-acid sequence, 229 residues long: Large ribosomal subunit protein uL1 (229 aa).

Belongs to the universal ribosomal protein uL1 family. Part of the 50S ribosomal subunit.

Its function is as follows. Binds directly to 23S rRNA. The L1 stalk is quite mobile in the ribosome, and is involved in E site tRNA release. Functionally, protein L1 is also a translational repressor protein, it controls the translation of the L11 operon by binding to its mRNA. The protein is Large ribosomal subunit protein uL1 of Streptococcus pyogenes serotype M1.